The primary structure comprises 344 residues: Fibronectin type 3 and ankyrin repeat domains 1 protein (344 aa).

Residues 11–108 (KPHPPVVGKV…VVSVATTREP (98 aa)) enclose the Fibronectin type-III domain. 6 ANK repeats span residues 109–139 (ISSE…MIDV), 143–172 (FGFT…DVNL), 176–205 (SGKD…SWEA), 209–238 (GGCT…EVDV), 243–273 (SGWT…DVNI), and 277–306 (DGKT…DATV).

As to quaternary structure, interacts with COPS5; regulates the phosphorylation of JUN and the transcriptional activity of AP-1. Interacts with RYBP; may prevent the ubiquitin-mediated proteasomal degradation of FANK1. In terms of processing, polyubiquitinated. Polyubiquitination leads to proteasomal degradation. Mostly restricted to testis (at protein level), including mid to late pachytene spermatocytes (stages VI-X), diplotene spermatocytes (stage XI), meiotically dividing spermatocytes (stage XII) and spermatids in steps 1-14. Highest levels in late pachytene spermatocytes and spermatids in steps 1-9.

The protein resides in the nucleus. Its subcellular location is the cytoplasm. It is found in the cytosol. It localises to the cytoskeleton. The protein localises to the cilium basal body. The protein resides in the cell projection. Its subcellular location is the cilium. In terms of biological role, through the activation of JUN and AP-1-mediated transcription, may regulate apoptosis. In Mus musculus (Mouse), this protein is Fibronectin type 3 and ankyrin repeat domains 1 protein.